A 214-amino-acid polypeptide reads, in one-letter code: Octanoyltransferase (214 aa).

Positions 28-203 (GSGAETLLLL…RFEGFLDEFM (176 aa)) constitute a BPL/LPL catalytic domain. Substrate contacts are provided by residues 66–73 (RGGDVTYH), 133–135 (SIG), and 146–148 (GFA). C164 (acyl-thioester intermediate) is an active-site residue.

This sequence belongs to the LipB family.

It localises to the cytoplasm. It catalyses the reaction octanoyl-[ACP] + L-lysyl-[protein] = N(6)-octanoyl-L-lysyl-[protein] + holo-[ACP] + H(+). Its pathway is protein modification; protein lipoylation via endogenous pathway; protein N(6)-(lipoyl)lysine from octanoyl-[acyl-carrier-protein]: step 1/2. Functionally, catalyzes the transfer of endogenously produced octanoic acid from octanoyl-acyl-carrier-protein onto the lipoyl domains of lipoate-dependent enzymes. Lipoyl-ACP can also act as a substrate although octanoyl-ACP is likely to be the physiological substrate. The sequence is that of Octanoyltransferase from Geotalea uraniireducens (strain Rf4) (Geobacter uraniireducens).